The following is a 232-amino-acid chain: Platelet-activating factor acetylhydrolase IB subunit alpha1 (232 aa).

The disordered stretch occupies residues 1–20 (MSGEGENPASKPTPVQDVQG). Ser-2 is subject to N-acetylserine. Ser-2 is modified (phosphoserine). Active-site residues include Ser-48, Asp-193, and His-196.

It belongs to the 'GDSL' lipolytic enzyme family. Platelet-activating factor acetylhydrolase IB beta/gamma subunits subfamily. As to quaternary structure, forms a catalytic dimer which is either homodimer (alpha1/alpha1 homodimer) or heterodimer with PAFAH1B2 (alpha1/alpha2 heterodimer). Component of the cytosolic (PAF-AH (I)) heterotetrameric enzyme, which is composed of PAFAH1B1 (beta), PAFAH1B2 (alpha2) and PAFAH1B3 (alpha1) subunits. The catalytic activity of the enzyme resides in the alpha1 (PAFAH1B3) and alpha2 (PAFAH1B2) subunits, whereas the beta subunit (PAFAH1B1) has regulatory activity. Trimer formation is not essential for the catalytic activity. Interacts with VLDLR; this interaction may modulate the Reelin pathway. Expressed in brain, spleen, lung, liver, kidney and testis. Not expressed in heart and skeletal muscle. Expressed in fetal brain as heterodimer. Not expressed in adult tissues. Expressed exclusively in granule cells.

Its subcellular location is the cytoplasm. The enzyme catalyses a 1-O-alkyl-2-acetyl-sn-glycero-3-phosphocholine + H2O = a 1-O-alkyl-sn-glycero-3-phosphocholine + acetate + H(+). It carries out the reaction 1-O-hexadecyl-2-acetyl-sn-glycero-3-phosphocholine + H2O = 1-O-hexadecyl-sn-glycero-3-phosphocholine + acetate + H(+). The catalysed reaction is 1-O-hexadecyl-2-acetyl-sn-glycero-3-phosphate + H2O = 1-O-hexadecyl-sn-glycero-3-phosphate + acetate + H(+). Beta subunit (PAFAH1B1) inhibits the acetylhydrolase activity of the alpha1/alpha1 catalytic homodimer. Functionally, alpha1 catalytic subunit of the cytosolic type I platelet-activating factor (PAF) acetylhydrolase (PAF-AH (I)) heterotetrameric enzyme that catalyzes the hydrolyze of the acetyl group at the sn-2 position of PAF and its analogs and modulates the action of PAF. The activity and substrate specificity of PAF-AH (I) are affected by its subunit composition. Both alpha1/alpha1 homodimer (PAFAH1B3/PAFAH1B3 homodimer) and alpha1/alpha2 heterodimer(PAFAH1B3/PAFAH1B2 heterodimer) hydrolyze 1-O-alkyl-2-acetyl-sn-glycero-3-phosphoric acid (AAGPA) more efficiently than PAF, but they have little hydrolytic activity towards 1-O-alkyl-2-acetyl-sn-glycero-3-phosphorylethanolamine (AAGPE). Plays an important role during the development of brain. The protein is Platelet-activating factor acetylhydrolase IB subunit alpha1 of Rattus norvegicus (Rat).